Reading from the N-terminus, the 164-residue chain is Magnesium-dependent phosphatase 1 (164 aa).

Catalysis depends on Asp11, which acts as the Nucleophile. Asp11 lines the Mg(2+) pocket. Leu12 and Asp13 together coordinate phosphate. Asp13 is a Mg(2+) binding site. Catalysis depends on Asp13, which acts as the Proton donor. Trp20 contacts substrate. Positions 69, 70, and 100 each coordinate phosphate. Arg70 is a substrate binding site. Asp123 lines the Mg(2+) pocket.

Belongs to the HAD-like hydrolase superfamily. Mg(2+) is required as a cofactor.

The enzyme catalyses O-phospho-L-tyrosyl-[protein] + H2O = L-tyrosyl-[protein] + phosphate. Inhibited by vanadate and zinc, and slightly by calcium. Its function is as follows. Magnesium-dependent phosphatase which may act as a tyrosine phosphatase. This is Magnesium-dependent phosphatase 1 (Mdp1) from Mus musculus (Mouse).